The following is a 343-amino-acid chain: Cytoplasmic tRNA 2-thiolation protein 1 (343 aa).

The protein belongs to the TtcA family. CTU1/NCS6/ATPBD3 subfamily.

It is found in the cytoplasm. It participates in tRNA modification; 5-methoxycarbonylmethyl-2-thiouridine-tRNA biosynthesis. Its function is as follows. Plays a central role in 2-thiolation of mcm(5)S(2)U at tRNA wobble positions of tRNA(Lys), tRNA(Glu) and tRNA(Gln). Directly binds tRNAs and probably acts by catalyzing adenylation of tRNAs, an intermediate required for 2-thiolation. It is unclear whether it acts as a sulfurtransferase that transfers sulfur from thiocarboxylated URM1 onto the uridine of tRNAs at wobble position. The chain is Cytoplasmic tRNA 2-thiolation protein 1 from Drosophila ananassae (Fruit fly).